Reading from the N-terminus, the 877-residue chain is Ewing's tumor-associated antigen 1 homolog (877 aa).

The tract at residues 1–82 is disordered; it reads MQLKDGGTGM…GRSPRGKETP (82 aa). The span at 56 to 65 shows a compositional bias: basic residues; sequence AGTRSARRAQ. A Glycyl lysine isopeptide (Lys-Gly) (interchain with G-Cter in SUMO2) cross-link involves residue Lys-87. An ATR-activation domain (AAD) motif is present at residues 107-113; sequence IFWDQNS. Coiled coils occupy residues 185–213 and 306–335; these read KTKN…IQEQ and AFLN…LLTE. Glycyl lysine isopeptide (Lys-Gly) (interchain with G-Cter in SUMO2) cross-links involve residues Lys-416 and Lys-444. The tract at residues 450–479 is disordered; the sequence is PSKTRNGELRNAGEHRFSSHPGDESRKVPF. The span at 454–476 shows a compositional bias: basic and acidic residues; sequence RNGELRNAGEHRFSSHPGDESRK. At Ser-467 the chain carries Phosphoserine. Lys-510 is covalently cross-linked (Glycyl lysine isopeptide (Lys-Gly) (interchain with G-Cter in SUMO2)). Positions 607 to 622 match the RBM1 motif motif; sequence GEVDDDLFCQACDDIE. Disordered regions lie at residues 626–664 and 818–877; these read QQEN…PSKH and ANQQ…ISLP. A compositionally biased stretch (low complexity) spans 637 to 662; it reads SVSYTSTRGSRSSSTASKQASQSAPS. Residues 818 to 833 show a composition bias toward polar residues; that stretch reads ANQQQSSINYSESLKP. Over residues 840–859 the composition is skewed to basic and acidic residues; the sequence is ERNRKYSPEEIQRKRQEALV. An RBM2 motif motif is present at residues 843–865; that stretch reads RKYSPEEIQRKRQEALVRRKAKA. Polar residues predominate over residues 868 to 877; it reads TVQSAPISLP.

In terms of assembly, interacts (via RBM1 motif) with RPA1. Interacts (via RBM2 motif) with RPA2. Interacts (via the ATR-activation domain motif) with ATR. In terms of processing, phosphorylated by ATR.

It is found in the nucleus. Replication stress response protein that accumulates at DNA damage sites and promotes replication fork progression and integrity. Recruited to stalled replication forks via interaction with the RPA complex and directly stimulates ATR kinase activity independently of TOPBP1. Probably only regulates a subset of ATR targets. The polypeptide is Ewing's tumor-associated antigen 1 homolog (Mus musculus (Mouse)).